The following is a 940-amino-acid chain: MSKKRLNEIARELGVSSKEVVAKAQELGFEVKSHASSVDEASAKRLAESFGGQKSEATKVAAKVSKPEKVDETPKVETAKVEKAKETQPVVKEEVAASAVQSASHRPQSRNFKAEREARAKEQAAKRAQNQGKGGQAKSDQDRRDNRQLGQGRSNNERNDRRDNRRDQRPEERKDNRFGDRRDNRDNRRQDNRSGRLARFEQREAAKPAGPKIDFKARAAALKAEQNAEYARTSEERFRQAQEAKKQPKKPKEIKFEEPVVESKPFVKPALVASVPEQVAETTVDTRRKKQARPDKKRDFNSDEEDGPRKQQRNRNSQNQVRNQRTSNWNNNKKNKKGKANQPAKPVTERKFHELPTEFEYTAGMTVAEIAKRIKREPAEIVKKLFLMGVMATQNQSLDGDTIELLMVDYGIEAKEKVEVDNADIERFFVEEGYLNEEEMTERPPVVTIMGHVDHGKTTLLDTLRNSRVATGEAGGITQHIGAYQIEEAGKKITFLDTPGHAAFTSMRARGASVTDLTILVVAADDGVMPQTIEAINHSKAANVPIIVAINKIDKPGANPERVIGELAEHGVISTAWGGESEFVEISAKFNQNIDELLETVLLVAEIQELKADPTVRAIGTVIEAHLDKGKGAVATLLVQQGTLNVQDPIVVGNTFGRVRAMTNDLGRRVKTAGPSTPVSITGLNETPMAGDHFAVYEDEKSARAAGEERAKRALLKQRQATQRVSLENLFDTLKAGEVKSVNVIIKADVQGSVEALASSLQKIEVEGVRVNIVHSAVGAINESDITLAEASNALVIGFNVRPTAEARSQAEADDVEVRLHSIIYKVIEEMEDAMKGMLDPEYEEKIIGEAIIRETFKVSKVGTIGGFMVVRGKVTRDSSVRVIRDGVVVFDGKLASLKRYKDDVKEVGNAQEGGLMIENYNDLKVDDTIEAYIMEEIKK.

Disordered regions lie at residues 48–264 (ESFG…VESK) and 278–351 (QVAE…TERK). Composition is skewed to basic and acidic residues over residues 65–95 (SKPEKVDETPKVETAKVEKAKETQPVVKEEV), 112–125 (FKAEREARAKEQAA), 155–206 (NNER…REAA), 232–258 (RTSEERFRQAQEAKKQPKKPKEIKFEE), and 292–301 (ARPDKKRDFN). Positions 314-332 (NRNSQNQVRNQRTSNWNNN) are enriched in low complexity. A tr-type G domain is found at 442–609 (ERPPVVTIMG…TVLLVAEIQE (168 aa)). The G1 stretch occupies residues 451–458 (GHVDHGKT). 451 to 458 (GHVDHGKT) contacts GTP. Positions 476–480 (GITQH) are G2. The tract at residues 497–500 (DTPG) is G3. GTP-binding positions include 497–501 (DTPGH) and 551–554 (NKID). The segment at 551 to 554 (NKID) is G4. Positions 587–589 (SAK) are G5.

The protein belongs to the TRAFAC class translation factor GTPase superfamily. Classic translation factor GTPase family. IF-2 subfamily.

It is found in the cytoplasm. In terms of biological role, one of the essential components for the initiation of protein synthesis. Protects formylmethionyl-tRNA from spontaneous hydrolysis and promotes its binding to the 30S ribosomal subunits. Also involved in the hydrolysis of GTP during the formation of the 70S ribosomal complex. In Streptococcus suis (strain 98HAH33), this protein is Translation initiation factor IF-2.